Here is a 615-residue protein sequence, read N- to C-terminus: Zinc finger protein 653 (615 aa).

Disordered stretches follow at residues M1–R48, R95–R117, P176–L236, and E401–G432. Residues P107–R118 carry the Nuclear localization signal motif. Basic residues predominate over residues K108–R117. Residues A193–S205 show a composition bias toward low complexity. The span at T226–L236 shows a compositional bias: polar residues. The span at A419–G432 shows a compositional bias: acidic residues. The short motif at E445–R451 is the Nuclear localization signal element. 5 C2H2-type zinc fingers span residues F467–H492, K498–H522, F528–H550, L556–H578, and F586–H609.

This sequence belongs to the krueppel C2H2-type zinc-finger protein family. In terms of assembly, interacts with NR5A1. In terms of tissue distribution, highly expressed in testis, cerebellum, temporal lobe, hippocampus and the adrenal gland. Moderately expressed in spleen, uterus, thymus, pancreas, kidney, stomach and rectum.

It localises to the nucleus. Functionally, transcriptional repressor. May repress NR5A1, PPARG, NR1H3, NR4A2, ESR1 and NR3C1 transcriptional activity. The polypeptide is Zinc finger protein 653 (ZNF653) (Homo sapiens (Human)).